A 93-amino-acid polypeptide reads, in one-letter code: Neutrophil cationic peptide 1 type B (93 aa).

The N-terminal stretch at 1 to 19 (MRTVPLFAACLLLTLMAQA) is a signal peptide. Residues 20–62 (EPLPRAADHSDTKMKGDREDHVAVISFWEEESTSLQDAGAGAG) constitute a propeptide that is removed on maturation. 3 disulfides stabilise this stretch: Cys-65-Cys-93, Cys-67-Cys-82, and Cys-72-Cys-92.

The protein belongs to the alpha-defensin family. Bone marrow.

Its subcellular location is the secreted. Its function is as follows. Has antibiotic, anti-fungi and antiviral activity. This chain is Neutrophil cationic peptide 1 type B, found in Cavia porcellus (Guinea pig).